The primary structure comprises 432 residues: MTSMTTRVLTGITTSGTPHLGNYVGAIRPAIQASAGADAESFYFLADLHSLIKAQDPARTQRSTLEIAATWLACGLDPDKVWFYRQSDVPETTELMWLLTCVAGKGILNRAHAYKAAVDRNRADGEDEDAGVTAGLFMYPVLMAADILIFNAHQVPVGRDQIQHIEMARDFAQRFNHVYGREFFTLPEAVIDEQVSTLPGLDGRKMSKSYGNTIPLFAPREELRKLVFSILTDSRAPGQAKDTQGSALFQLYQAFATPQESAAFAQAFADGIGWGDAKQQVFERIDQEIAPLRTRYEGLIAEPARIEAILRAGGARLRARYATPLLAELRDAVGLRDLSSQAATAAVHASEKIALPVFKQYRESDGQFYFKLNDGAGALLLQSDGFASPRDAGQVIARLKQAAQASDLQLPGVHAQVDADVVLAAMDALREA.

Residues 13–15 and 21–22 each bind ATP; these read TTS and GN. Positions 14 to 22 match the 'HIGH' region motif; that stretch reads TSGTPHLGN. Asp-146 contributes to the L-tryptophan binding site. ATP-binding positions include 158–160, Leu-198, and 205–209; these read GRD and KMSKS. The short motif at 205–209 is the 'KMSKS' region element; it reads KMSKS.

This sequence belongs to the class-I aminoacyl-tRNA synthetase family. In terms of assembly, homodimer.

It is found in the cytoplasm. The catalysed reaction is tRNA(Trp) + L-tryptophan + ATP = L-tryptophyl-tRNA(Trp) + AMP + diphosphate + H(+). Its function is as follows. Catalyzes the attachment of tryptophan to tRNA(Trp). In Xanthomonas axonopodis pv. citri (strain 306), this protein is Tryptophan--tRNA ligase.